Here is a 474-residue protein sequence, read N- to C-terminus: Bifunctional protein HldE (474 aa).

A ribokinase region spans residues 1-318; the sequence is MKMTLPDFHC…ENAIRGRAET (318 aa). 195 to 198 is an ATP binding site; sequence NLSE. Residue Asp-264 is part of the active site. Residues 344–474 are cytidylyltransferase; sequence MTNGCFDILH…TNIIKAIKNQ (131 aa).

The protein in the N-terminal section; belongs to the carbohydrate kinase PfkB family. It in the C-terminal section; belongs to the cytidylyltransferase family. As to quaternary structure, homodimer.

The enzyme catalyses D-glycero-beta-D-manno-heptose 7-phosphate + ATP = D-glycero-beta-D-manno-heptose 1,7-bisphosphate + ADP + H(+). It carries out the reaction D-glycero-beta-D-manno-heptose 1-phosphate + ATP + H(+) = ADP-D-glycero-beta-D-manno-heptose + diphosphate. It participates in nucleotide-sugar biosynthesis; ADP-L-glycero-beta-D-manno-heptose biosynthesis; ADP-L-glycero-beta-D-manno-heptose from D-glycero-beta-D-manno-heptose 7-phosphate: step 1/4. The protein operates within nucleotide-sugar biosynthesis; ADP-L-glycero-beta-D-manno-heptose biosynthesis; ADP-L-glycero-beta-D-manno-heptose from D-glycero-beta-D-manno-heptose 7-phosphate: step 3/4. Its pathway is bacterial outer membrane biogenesis; LPS core biosynthesis. Catalyzes the phosphorylation of D-glycero-D-manno-heptose 7-phosphate at the C-1 position to selectively form D-glycero-beta-D-manno-heptose-1,7-bisphosphate. In terms of biological role, catalyzes the ADP transfer from ATP to D-glycero-beta-D-manno-heptose 1-phosphate, yielding ADP-D-glycero-beta-D-manno-heptose. The protein is Bifunctional protein HldE of Photorhabdus laumondii subsp. laumondii (strain DSM 15139 / CIP 105565 / TT01) (Photorhabdus luminescens subsp. laumondii).